The chain runs to 189 residues: FUN14 domain-containing protein 2 (189 aa).

Over M1–K80 the chain is Cytoplasmic. Residues S10 and S53 each carry the phosphoserine modification. The chain crosses the membrane as a helical span at residues Y81–F101. Topologically, residues Q102–L107 are mitochondrial intermembrane. The chain crosses the membrane as a helical span at residues A108–I128. At K129 to E164 the chain is on the cytoplasmic side. A Phosphoserine modification is found at S151. The helical transmembrane segment at V165–L185 threads the bilayer. Residues G186 to S189 are Mitochondrial intermembrane-facing.

It belongs to the FUN14 family. Highly expressed in platelets (at protein level).

The protein localises to the mitochondrion outer membrane. The protein resides in the nucleus. Binds directly and specifically 1,2-Diacyl-sn-glycero-3-phospho-(1'-myo-inositol-3',4',5'-bisphosphate) (PIP3) leading to the recruitment of PIP3 to mitochondria and may play a role in the regulation of the platelet activation via AKT/GSK3B/cGMP signaling pathways. May act as transcription factor that regulates SREBP1 (isoform SREBP-1C) expression in order to modulate triglyceride (TG) homeostasis in hepatocytes. The sequence is that of FUN14 domain-containing protein 2 from Homo sapiens (Human).